Reading from the N-terminus, the 593-residue chain is Aspartate--tRNA(Asp/Asn) ligase (593 aa).

Glu182 lines the L-aspartate pocket. The interval 206-209 is aspartate; the sequence is QLFK. Arg228 lines the L-aspartate pocket. Residues 228–230 and Gln237 each bind ATP; that span reads RDE. An L-aspartate-binding site is contributed by His455. Glu489 contacts ATP. An L-aspartate-binding site is contributed by Arg496. An ATP-binding site is contributed by 541–544; it reads GLDR.

It belongs to the class-II aminoacyl-tRNA synthetase family. Type 1 subfamily. Homodimer.

The protein resides in the cytoplasm. The enzyme catalyses tRNA(Asx) + L-aspartate + ATP = L-aspartyl-tRNA(Asx) + AMP + diphosphate. Functionally, aspartyl-tRNA synthetase with relaxed tRNA specificity since it is able to aspartylate not only its cognate tRNA(Asp) but also tRNA(Asn). Reaction proceeds in two steps: L-aspartate is first activated by ATP to form Asp-AMP and then transferred to the acceptor end of tRNA(Asp/Asn). This chain is Aspartate--tRNA(Asp/Asn) ligase, found in Geotalea uraniireducens (strain Rf4) (Geobacter uraniireducens).